We begin with the raw amino-acid sequence, 380 residues long: Cytochrome b (380 aa).

Transmembrane regions (helical) follow at residues 34 to 54 (FGSL…LLAA), 78 to 99 (WLIR…YLHI), 114 to 134 (WNTG…GYVL), and 179 to 199 (FFTL…IHLT). Positions 84 and 98 each coordinate heme b. The heme b site is built by H183 and H197. H202 is a binding site for a ubiquinone. 4 consecutive transmembrane segments (helical) span residues 227–247 (LKDI…ALFS), 289–309 (LGGV…PLLH), 321–341 (FSQL…WVGS), and 348–368 (FIII…ILFP).

The protein belongs to the cytochrome b family. As to quaternary structure, the cytochrome bc1 complex contains 11 subunits: 3 respiratory subunits (MT-CYB, CYC1 and UQCRFS1), 2 core proteins (UQCRC1 and UQCRC2) and 6 low-molecular weight proteins (UQCRH/QCR6, UQCRB/QCR7, UQCRQ/QCR8, UQCR10/QCR9, UQCR11/QCR10 and a cleavage product of UQCRFS1). This cytochrome bc1 complex then forms a dimer. Requires heme b as cofactor.

Its subcellular location is the mitochondrion inner membrane. In terms of biological role, component of the ubiquinol-cytochrome c reductase complex (complex III or cytochrome b-c1 complex) that is part of the mitochondrial respiratory chain. The b-c1 complex mediates electron transfer from ubiquinol to cytochrome c. Contributes to the generation of a proton gradient across the mitochondrial membrane that is then used for ATP synthesis. The sequence is that of Cytochrome b (MT-CYB) from Antigone vipio (White-naped crane).